The primary structure comprises 376 residues: MAKQDYYEILGVSKTAEEREIRKAYKRLAMKYHPDRNQGDKEAEAKFKEIKEAYEVLTDSQKRAAYDQYGHAAFEQGGMGGGGFGGGADFSDIFGDVFGDIFGGGRGRQRAARGADLRYNMELTLEEAVRGVTKEIRIPTLEECDVCHGSGAKPGTQPQTCPTCHGSGQVQMRQGFFAVQQTCPHCQGRGTLIKDPCNKCHGHGRVERSKTLSVKIPAGVDTGDRIRLAGEGEAGEHGAPAGDLYVQVQVKQHPIFEREGNNLYCEVPINFAMAALGGEIEVPTLDGRVKLKVPGETQTGKLFRMRGKGVKSVRGGAQGDLLCRVVVETQIGLDEKDKQLLHELHESYGGPTGEHNSPRSKSFFDGVKKFFDDLTR.

One can recognise a J domain in the interval 5 to 70 (DYYEILGVSK…QKRAAYDQYG (66 aa)). The CR-type zinc-finger motif lies at 131–209 (GVTKEIRIPT…CHGHGRVERS (79 aa)). Residues Cys-144, Cys-147, Cys-161, Cys-164, Cys-183, Cys-186, Cys-197, and Cys-200 each contribute to the Zn(2+) site. 4 CXXCXGXG motif repeats span residues 144-151 (CDVCHGSG), 161-168 (CPTCHGSG), 183-190 (CPHCQGRG), and 197-204 (CNKCHGHG).

It belongs to the DnaJ family. As to quaternary structure, homodimer. Zn(2+) serves as cofactor.

It is found in the cytoplasm. In terms of biological role, participates actively in the response to hyperosmotic and heat shock by preventing the aggregation of stress-denatured proteins and by disaggregating proteins, also in an autonomous, DnaK-independent fashion. Unfolded proteins bind initially to DnaJ; upon interaction with the DnaJ-bound protein, DnaK hydrolyzes its bound ATP, resulting in the formation of a stable complex. GrpE releases ADP from DnaK; ATP binding to DnaK triggers the release of the substrate protein, thus completing the reaction cycle. Several rounds of ATP-dependent interactions between DnaJ, DnaK and GrpE are required for fully efficient folding. Also involved, together with DnaK and GrpE, in the DNA replication of plasmids through activation of initiation proteins. This Shigella flexneri protein is Chaperone protein DnaJ.